The sequence spans 380 residues: MLYHLLYPLAYKLSLLNVLRYPSFRIVAAGLTAMVLGLLLGPIFIERMRVLQYGSTNVREDTPDTHKKKAGTPSMGGALILASVAIATLLFADLANRFVWAALLVTLGYGAIGFTDDWLKISKKNSKGLAGKKKLVLQVLVVVVVYYACLTDWRFHVEHRFPWVFVGSYVDLHVTLPFVPSRLFNPDLGFLYLPFMVFVVIATSNAVNLTDGLDGLAIGPTVVSAMTFLALSYVAGATIAGFSLAEYLRVPYIPGAEELGVFCSAIFGAGVAFLWYNTYPASVFMGDVGSLALGGGLGMMAVLTKNEFASAILHGVFLTETVSVILQVWSFKTTGKRIFRMAPIHHHYELKGWAEPKIIVRFWIISVMLALVALLSIKLR.

11 helical membrane-spanning segments follow: residues 26 to 46 (IVAA…IFIE), 75 to 95 (MGGA…ADLA), 98 to 118 (FVWA…TDDW), 135 to 155 (LVLQ…DWRF), 161 to 181 (FPWV…FVPS), 183 to 203 (LFNP…VIAT), 222 to 242 (VVSA…IAGF), 259 to 279 (LGVF…YNTY), 283 to 303 (VFMG…MAVL), 311 to 331 (AILH…VWSF), and 357 to 377 (KIIV…LLSI).

This sequence belongs to the glycosyltransferase 4 family. MraY subfamily. Mg(2+) is required as a cofactor.

Its subcellular location is the cell inner membrane. It catalyses the reaction UDP-N-acetyl-alpha-D-muramoyl-L-alanyl-gamma-D-glutamyl-meso-2,6-diaminopimeloyl-D-alanyl-D-alanine + di-trans,octa-cis-undecaprenyl phosphate = di-trans,octa-cis-undecaprenyl diphospho-N-acetyl-alpha-D-muramoyl-L-alanyl-D-glutamyl-meso-2,6-diaminopimeloyl-D-alanyl-D-alanine + UMP. It participates in cell wall biogenesis; peptidoglycan biosynthesis. Functionally, catalyzes the initial step of the lipid cycle reactions in the biosynthesis of the cell wall peptidoglycan: transfers peptidoglycan precursor phospho-MurNAc-pentapeptide from UDP-MurNAc-pentapeptide onto the lipid carrier undecaprenyl phosphate, yielding undecaprenyl-pyrophosphoryl-MurNAc-pentapeptide, known as lipid I. This chain is Phospho-N-acetylmuramoyl-pentapeptide-transferase, found in Anaeromyxobacter dehalogenans (strain 2CP-1 / ATCC BAA-258).